The following is a 198-amino-acid chain: Probable GTP-binding protein EngB (198 aa).

Positions 22 to 195 constitute an EngB-type G domain; the sequence is DLPEIALAGR…WKAIHKMTKT (174 aa). Residues 30–37, 57–61, 75–78, 142–145, and 174–176 contribute to the GTP site; these read GRSNVGKS, GKTQT, DVPG, TKAD, and FSS. Positions 37 and 59 each coordinate Mg(2+).

This sequence belongs to the TRAFAC class TrmE-Era-EngA-EngB-Septin-like GTPase superfamily. EngB GTPase family. Mg(2+) is required as a cofactor.

Its function is as follows. Necessary for normal cell division and for the maintenance of normal septation. The polypeptide is Probable GTP-binding protein EngB (Bacillus cereus (strain G9842)).